A 309-amino-acid polypeptide reads, in one-letter code: Tagatose-6-phosphate kinase (309 aa).

This sequence belongs to the carbohydrate kinase PfkB family. LacC subfamily.

The enzyme catalyses D-tagatofuranose 6-phosphate + ATP = D-tagatofuranose 1,6-bisphosphate + ADP + H(+). The protein operates within carbohydrate metabolism; D-tagatose 6-phosphate degradation; D-glyceraldehyde 3-phosphate and glycerone phosphate from D-tagatose 6-phosphate: step 1/2. The chain is Tagatose-6-phosphate kinase from Streptococcus pyogenes serotype M4 (strain MGAS10750).